A 653-amino-acid chain; its full sequence is MTSQYAGELCTLLVEDNFGELFARIFSTLNRYDRLSFSRLKFYSRLSNAQLRHGLAAMIQQHLVYHYTSYDDGITYYEPNMQSAYYLVRSGKILELIEHRLGKYAATVMSTIMFLGHAQVGYLETLPALRPSNSDVNRASEERGGIHETEEYHGEEARQETEEHRETEGRPNGLNSDYTSSERPALLHPTLKALAGHGYILRVRDAQFQSYADNALDAERTIKSRPDIKALKGKKLDEAVTEGTLELLKERLDGDLTRGLMFNGVPRGAKRRHTTGATEASNKKARVDYAAVDEDEDGGEENEWSDDDFGEDTIPMESGITVRINYEKLDVALRNRRFLELAERDSSPVTAEVYESLLRRIEYQTAKCRDTTEIPREGEEGEHYSVPVPLRAVVEDVDLFLDLAGSVGPMEVSQPINRRGKRPLEETTNGAAHDGTNGGQSDGNRTYEVDQHLCLLAQPPYSLTSKRMVSGLITWTVEFRHLARKLRHLELERIIEARYGDVALRVVRVLHDKGKLDEKRLQEISLLPFKDLRQVLASMQTGGFVDLQEVPRDALRQPSKTIFLWFYDPDRVGNSVLEDTYKAMSRCLQRLRFERSRLKEFLEKTERSDVKGNEERYLSEAELTLLGQWRAKEALLLGEVARLDEMVAVIRDY.

Disordered stretches follow at residues 131–181 (PSNS…YTSS), 266–285 (PRGA…NKKA), 293–312 (DEDE…FGED), and 412–444 (VSQP…SDGN). Residues 138–169 (RASEERGGIHETEEYHGEEARQETEEHRETEG) show a composition bias toward basic and acidic residues. Over residues 293-311 (DEDEDGGEENEWSDDDFGE) the composition is skewed to acidic residues. The segment at 580 to 601 (TYKAMSRCLQRLRFERSRLKEF) is leucine-zipper.

The protein belongs to the RNA polymerase beta chain family. As to quaternary structure, component of the RNA polymerase III (Pol III) complex consisting of 17 subunits.

The protein localises to the nucleus. Functionally, DNA-dependent RNA polymerase catalyzes the transcription of DNA into RNA using the four ribonucleoside triphosphates as substrates. Specific core component of RNA polymerase III which synthesizes small RNAs, such as 5S rRNA and tRNAs. This Aspergillus oryzae (strain ATCC 42149 / RIB 40) (Yellow koji mold) protein is DNA-directed RNA polymerase III subunit rpc3 (rpc82).